Consider the following 222-residue polypeptide: Putative serine proteinase inhibitor 2 homolog second part (222 aa).

It belongs to the serpin family. Poxviruses subfamily.

The protein is Putative serine proteinase inhibitor 2 homolog second part of Homo sapiens (Human).